We begin with the raw amino-acid sequence, 371 residues long: Queuine tRNA-ribosyltransferase (371 aa).

The active-site Proton acceptor is the Asp90. Substrate contacts are provided by residues 90–94 (DSGGF), Asp144, Gln188, and Gly215. The tract at residues 246–252 (GVGTPED) is RNA binding. Asp265 (nucleophile) is an active-site residue. The tract at residues 270–274 (TRNAR) is RNA binding; important for wobble base 34 recognition. Residues Cys303, Cys305, Cys308, and His334 each contribute to the Zn(2+) site.

The protein belongs to the queuine tRNA-ribosyltransferase family. As to quaternary structure, homodimer. Within each dimer, one monomer is responsible for RNA recognition and catalysis, while the other monomer binds to the replacement base PreQ1. Requires Zn(2+) as cofactor.

The catalysed reaction is 7-aminomethyl-7-carbaguanine + guanosine(34) in tRNA = 7-aminomethyl-7-carbaguanosine(34) in tRNA + guanine. The protein operates within tRNA modification; tRNA-queuosine biosynthesis. Catalyzes the base-exchange of a guanine (G) residue with the queuine precursor 7-aminomethyl-7-deazaguanine (PreQ1) at position 34 (anticodon wobble position) in tRNAs with GU(N) anticodons (tRNA-Asp, -Asn, -His and -Tyr). Catalysis occurs through a double-displacement mechanism. The nucleophile active site attacks the C1' of nucleotide 34 to detach the guanine base from the RNA, forming a covalent enzyme-RNA intermediate. The proton acceptor active site deprotonates the incoming PreQ1, allowing a nucleophilic attack on the C1' of the ribose to form the product. After dissociation, two additional enzymatic reactions on the tRNA convert PreQ1 to queuine (Q), resulting in the hypermodified nucleoside queuosine (7-(((4,5-cis-dihydroxy-2-cyclopenten-1-yl)amino)methyl)-7-deazaguanosine). The chain is Queuine tRNA-ribosyltransferase from Neisseria meningitidis serogroup B (strain ATCC BAA-335 / MC58).